The sequence spans 505 residues: Deoxyguanosinetriphosphate triphosphohydrolase (505 aa).

The HD domain occupies 66–273 (RLTHSMEVQQ…MEAADDISYC (208 aa)).

This sequence belongs to the dGTPase family. Type 1 subfamily. As to quaternary structure, homotetramer. The cofactor is Mg(2+).

It carries out the reaction dGTP + H2O = 2'-deoxyguanosine + triphosphate + H(+). In terms of biological role, dGTPase preferentially hydrolyzes dGTP over the other canonical NTPs. The chain is Deoxyguanosinetriphosphate triphosphohydrolase from Salmonella enteritidis PT4 (strain P125109).